The chain runs to 27 residues: Cupiennin-3b (27 aa).

Residue Glu-27 is modified to Glutamic acid 1-amide.

As to expression, expressed by the venom gland.

It is found in the secreted. In Cupiennius salei (American wandering spider), this protein is Cupiennin-3b.